Reading from the N-terminus, the 720-residue chain is MNGIMTTSSHSNFYNQDLVGAPSSSDHIPGPSSQDQPTNNNSPQHHHQHDQSQTTHQNHPLNQPIHHHPTQQNQSESQQSRQSHHLQQQQQQQQQQQQNQHNQQNLASSSTSYEMPSIYQQFTGSYQQTRVPKNFLLENANYYTLQPGFPLVQAADYYSTPTTTSANDYQNSTINSIISPSFQMGSVSTPDTQNSSIRSKQQQQHSYQQQQPQQLSQSQHQSQVPDIFYTQGGTIGGYVTTKQQQKEFSRKTSGDQTLVPQTNSKLQQQISETSYSQQQQQQQSPPTPQKQQQQQHYQHQTTQPYGGTGFMLYSQTGGPSSSPVAGNISIPTTIATTGQPNSQFQFTYGSPQQGSSSKTNQMYLYQRQQQQQQQHQQPQSQQMSQISQLSQQIPPQGSSKNISINSTPTKSRASSITTRSGRQSRSTSISSFIPQPDYPERVIRPKVATTRWDDENTNCYQVRARNILVSRREDTNYINGTKLLNVIGMTRGKRDGILKTEKIKNVVKVGSMNLKGVWIPFDRAYEIARNEGVDSLLYPLFVKNIKQYFLTKGHKLKSEDDEQEILEEGMTRQREEVRREGRSNGVGDFHNEEEEEIVGIQEDAGPNTAENDVPGDDEEEEDDDDDDDDDEEEGEQDDEEEEDGSSTSMSSSKNSESKLLETRDVIKSIVEEGDSTTGNVSEVKYVHEYLERSPQSTAIKEEDLYYGSSHNTPLTVHKTL.

Polar residues-rich tracts occupy residues 1–15 (MNGI…NFYN) and 22–35 (PSSS…SSQD). Disordered regions lie at residues 1 to 111 (MNGI…SSST), 181 to 223 (SFQM…HQSQ), 245 to 336 (QKEF…TIAT), and 365 to 437 (YQRQ…PQPD). Low complexity predominate over residues 71 to 105 (QQNQSESQQSRQSHHLQQQQQQQQQQQQNQHNQQN). A compositionally biased stretch (polar residues) spans 181-200 (SFQMGSVSTPDTQNSSIRSK). Positions 201 to 223 (QQQQHSYQQQQPQQLSQSQHQSQ) are enriched in low complexity. Over residues 254-266 (GDQTLVPQTNSKL) the composition is skewed to polar residues. A compositionally biased stretch (low complexity) spans 267–304 (QQQISETSYSQQQQQQQSPPTPQKQQQQQHYQHQTTQP). Positions 313–336 (YSQTGGPSSSPVAGNISIPTTIAT) are enriched in polar residues. Residues 366–399 (QRQQQQQQQHQQPQSQQMSQISQLSQQIPPQGSS) show a composition bias toward low complexity. Polar residues predominate over residues 400 to 413 (KNISINSTPTKSRA). Residues 414–433 (SSITTRSGRQSRSTSISSFI) show a composition bias toward low complexity. The HTH APSES-type domain occupies 446 to 552 (KVATTRWDDE…KNIKQYFLTK (107 aa)). A DNA-binding region (H-T-H motif) is located at residues 480–501 (GTKLLNVIGMTRGKRDGILKTE). The span at 569-582 (GMTRQREEVRREGR) shows a compositional bias: basic and acidic residues. The segment at 569-662 (GMTRQREEVR…KNSESKLLET (94 aa)) is disordered. The segment covering 613–644 (VPGDDEEEEDDDDDDDDDEEEGEQDDEEEEDG) has biased composition (acidic residues). Over residues 645 to 654 (SSTSMSSSKN) the composition is skewed to low complexity.

The protein belongs to the EFG1/PHD1/stuA family.

It localises to the nucleus. Its function is as follows. Transcription factor that regulates filamentous growth through repression of EFG1. Regulates the level of colonizing fungi, favoring commensalism as opposed to candidiasis. The protein is Transcriptional regulator EFH1 (EFH1) of Candida albicans (strain SC5314 / ATCC MYA-2876) (Yeast).